A 1045-amino-acid chain; its full sequence is Bifunctional glutamine synthetase adenylyltransferase/adenylyl-removing enzyme (1045 aa).

Residues methionine 1–leucine 527 form an adenylyl removase region. The tract at residues asparagine 533–phenylalanine 1045 is adenylyl transferase.

Belongs to the GlnE family. It depends on Mg(2+) as a cofactor.

It carries out the reaction [glutamine synthetase]-O(4)-(5'-adenylyl)-L-tyrosine + phosphate = [glutamine synthetase]-L-tyrosine + ADP. The catalysed reaction is [glutamine synthetase]-L-tyrosine + ATP = [glutamine synthetase]-O(4)-(5'-adenylyl)-L-tyrosine + diphosphate. In terms of biological role, involved in the regulation of glutamine synthetase GlnA, a key enzyme in the process to assimilate ammonia. When cellular nitrogen levels are high, the C-terminal adenylyl transferase (AT) inactivates GlnA by covalent transfer of an adenylyl group from ATP to specific tyrosine residue of GlnA, thus reducing its activity. Conversely, when nitrogen levels are low, the N-terminal adenylyl removase (AR) activates GlnA by removing the adenylyl group by phosphorolysis, increasing its activity. The regulatory region of GlnE binds the signal transduction protein PII (GlnB) which indicates the nitrogen status of the cell. This is Bifunctional glutamine synthetase adenylyltransferase/adenylyl-removing enzyme from Corynebacterium glutamicum (strain ATCC 13032 / DSM 20300 / JCM 1318 / BCRC 11384 / CCUG 27702 / LMG 3730 / NBRC 12168 / NCIMB 10025 / NRRL B-2784 / 534).